A 355-amino-acid polypeptide reads, in one-letter code: Methyltransferase FUS9 (355 aa).

The S-adenosyl-L-homocysteine site is built by Tyr18, Asn63, Asp86, Ser123, and Phe124. Residue Phe231 participates in Mg(2+) binding.

This sequence belongs to the methyltransferase superfamily. Type-7 methyltransferase family. Mg(2+) is required as a cofactor.

Its pathway is mycotoxin biosynthesis. Its function is as follows. Methyltransferase; part of the gene cluster that mediates the biosynthesis of the mycotoxin fusarin C. Within the cluster, FUS1, FUS2, FUS8 and FUS9 are sufficient for fusarin production. The roles of the other FUS members are yet undetermined. The fusarin C synthetase FUS1 is responsible for the condensation of one acetyl-coenzyme A (CoA) unit with six malonyl-CoA units and the amide linkage of the arising heptaketide and homoserine, subsequently releasing the first intermediate, prefusarin, as an alcohol with an open ring structure. The cytochrome P450 monooxygenase FUS8 participates in multiple oxidation processes at carbon C-20 and is able to use the FUS1 product as substrate, resulting in formation of 20-hydroxy-prefusarin. This reaction seems to be essential before the 2-pyrrolidone ring closure can be catalyzed by FUS2, generating 20-hydroxy-fusarin. FUS8 is able to further oxidizes carbon C-20 after ring closure, resulting in the formation of carboxy-fusarin C. As the last step, FUS9 methylates the hydroxyl group at C-21 to generate fusarin C. Fusarin C can then rearrange to epi-fusarin C, the (z)-isomers, and fusarin A and fusarin D. The sequence is that of Methyltransferase FUS9 from Gibberella fujikuroi (strain CBS 195.34 / IMI 58289 / NRRL A-6831) (Bakanae and foot rot disease fungus).